We begin with the raw amino-acid sequence, 352 residues long: UDP-3-O-acylglucosamine N-acyltransferase (352 aa).

The Proton acceptor role is filled by His257.

The protein belongs to the transferase hexapeptide repeat family. LpxD subfamily. Homotrimer.

The enzyme catalyses a UDP-3-O-[(3R)-3-hydroxyacyl]-alpha-D-glucosamine + a (3R)-hydroxyacyl-[ACP] = a UDP-2-N,3-O-bis[(3R)-3-hydroxyacyl]-alpha-D-glucosamine + holo-[ACP] + H(+). The protein operates within bacterial outer membrane biogenesis; LPS lipid A biosynthesis. In terms of biological role, catalyzes the N-acylation of UDP-3-O-acylglucosamine using 3-hydroxyacyl-ACP as the acyl donor. Is involved in the biosynthesis of lipid A, a phosphorylated glycolipid that anchors the lipopolysaccharide to the outer membrane of the cell. The polypeptide is UDP-3-O-acylglucosamine N-acyltransferase (Methylobacterium sp. (strain 4-46)).